The following is a 537-amino-acid chain: ATP synthase subunit beta (537 aa).

The segment at 1–61 (MAKAATSKKE…SSPQKGGKKG (61 aa)) is disordered. Residues 7 to 18 (SKKEASKVEAKK) are compositionally biased toward basic and acidic residues. A compositionally biased stretch (polar residues) spans 44-55 (NSPSRTGSSSPQ). Residue 209 to 216 (GGAGVGKT) coordinates ATP.

This sequence belongs to the ATPase alpha/beta chains family. In terms of assembly, F-type ATPases have 2 components, CF(1) - the catalytic core - and CF(0) - the membrane proton channel. CF(1) has five subunits: alpha(3), beta(3), gamma(1), delta(1), epsilon(1). CF(0) has three main subunits: a(1), b(2) and c(9-12). The alpha and beta chains form an alternating ring which encloses part of the gamma chain. CF(1) is attached to CF(0) by a central stalk formed by the gamma and epsilon chains, while a peripheral stalk is formed by the delta and b chains.

The protein resides in the cell inner membrane. The enzyme catalyses ATP + H2O + 4 H(+)(in) = ADP + phosphate + 5 H(+)(out). Produces ATP from ADP in the presence of a proton gradient across the membrane. The catalytic sites are hosted primarily by the beta subunits. The protein is ATP synthase subunit beta of Bartonella bacilliformis (strain ATCC 35685 / KC583 / Herrer 020/F12,63).